The sequence spans 253 residues: 5'/3'-nucleotidase SurE (253 aa).

Asp-8, Asp-9, Ser-39, and Asn-92 together coordinate a divalent metal cation.

Belongs to the SurE nucleotidase family. Requires a divalent metal cation as cofactor.

The protein resides in the cytoplasm. It carries out the reaction a ribonucleoside 5'-phosphate + H2O = a ribonucleoside + phosphate. The enzyme catalyses a ribonucleoside 3'-phosphate + H2O = a ribonucleoside + phosphate. It catalyses the reaction [phosphate](n) + H2O = [phosphate](n-1) + phosphate + H(+). Nucleotidase with a broad substrate specificity as it can dephosphorylate various ribo- and deoxyribonucleoside 5'-monophosphates and ribonucleoside 3'-monophosphates with highest affinity to 3'-AMP. Also hydrolyzes polyphosphate (exopolyphosphatase activity) with the preference for short-chain-length substrates (P20-25). Might be involved in the regulation of dNTP and NTP pools, and in the turnover of 3'-mononucleotides produced by numerous intracellular RNases (T1, T2, and F) during the degradation of various RNAs. The chain is 5'/3'-nucleotidase SurE from Shigella dysenteriae serotype 1 (strain Sd197).